The sequence spans 93 residues: Transcription factor PRE3 (93 aa).

The 56-residue stretch at 6–61 (SRSRQSSGTSRISEDQINDLIIKLQQLLPELRDSRRSDKVSAARVLQDTCNYIRNL) folds into the bHLH domain.

As to quaternary structure, homodimer. Interacts with BHLH 147, BHLH148, BHLH149, BHLH150 and IBH1. Interacts with SIEL. Expressed in root and shoot meristems, and young siliques. Low levels detected in all aerial tissues.

It localises to the nucleus. It is found in the cytoplasm. Functionally, atypical and probable non DNA-binding bHLH transcription factor required for MONOPTEROS-dependent root initiation in embryo. Promotes the correct definition of the hypophysis cell division plane. Transcriptionally controlled by MONOPTEROS. Moves from its site of synthesis in pro-embryos cells into the hypophysis. Regulates brassinosteroid (BR) signaling by sequestering negative BR signaling components. May function as positive regulator of gibberellin signaling. May play a role in the regulation of light signaling and possibly auxin signaling. This chain is Transcription factor PRE3 (PRE3), found in Arabidopsis thaliana (Mouse-ear cress).